Reading from the N-terminus, the 190-residue chain is Potassium-transporting ATPase KdpC subunit (190 aa).

Residues 10 to 30 (TFLFLLLITGGVYPLLTTALG) traverse the membrane as a helical segment.

It belongs to the KdpC family. As to quaternary structure, the system is composed of three essential subunits: KdpA, KdpB and KdpC.

It is found in the cell inner membrane. Functionally, part of the high-affinity ATP-driven potassium transport (or Kdp) system, which catalyzes the hydrolysis of ATP coupled with the electrogenic transport of potassium into the cytoplasm. This subunit acts as a catalytic chaperone that increases the ATP-binding affinity of the ATP-hydrolyzing subunit KdpB by the formation of a transient KdpB/KdpC/ATP ternary complex. This Escherichia coli (strain SMS-3-5 / SECEC) protein is Potassium-transporting ATPase KdpC subunit.